The primary structure comprises 99 residues: Malonate decarboxylase acyl carrier protein (99 aa).

The residue at position 25 (S25) is an O-(phosphoribosyl dephospho-coenzyme A)serine.

Belongs to the MdcC family. Post-translationally, covalently binds the prosthetic group of malonate decarboxylase.

It is found in the cytoplasm. In terms of biological role, subunit of malonate decarboxylase, it is an acyl carrier protein to which acetyl and malonyl thioester residues are bound via a 2'-(5''-phosphoribosyl)-3'-dephospho-CoA prosthetic group and turn over during the catalytic mechanism. The chain is Malonate decarboxylase acyl carrier protein from Pseudomonas paraeruginosa (strain DSM 24068 / PA7) (Pseudomonas aeruginosa (strain PA7)).